The following is an 837-amino-acid chain: Tuftelin-interacting protein 11 (837 aa).

Basic and acidic residues-rich tracts occupy residues 1 to 13 (MSLS…GEGR) and 53 to 64 (VWAERDSDDERP). 3 disordered regions span residues 1 to 21 (MSLS…DDER), 53 to 72 (VWAE…KRAR), and 85 to 133 (LKKG…KGFA). Phosphoserine occurs at positions 2, 59, and 98. Residues 91-102 (EEAELEDSDDEE) show a composition bias toward acidic residues. Basic and acidic residues predominate over residues 103-116 (RPVKQDDFPKDFGP). A Phosphoserine modification is found at serine 144. Residues 149–195 (TKGIGQKLLQKMGYVPGRGLGKNAQGIINPIEAKQRKGKGAVGAYGS) enclose the G-patch domain. Residues 179–236 (IEAKQRKGKGAVGAYGSERTTQSMQDFPVVDSEEEAEEEFQKGLSQWRKDPSGSKKKP) are disordered. Serine 210 is subject to Phosphoserine. A Nuclear localization signal motif is present at residues 700–705 (VKDKFN). Residues 710–734 (IMNRAVSSNVGAYMQPGARENIAYL) are required for nuclear speckle localization.

It belongs to the TFP11/STIP family. In terms of assembly, identified in the spliceosome C complex. Found in the Intron Large (IL) complex, a post-mRNA release spliceosomal complex containing the excised intron, U2, U5 and U6 snRNPs, and splicing factors. Interacts with TUFT1. Interacts with DHX15; indicative for a recruitment of DHX15 to the IL complex. Interacts with GCFC2.

Its subcellular location is the cytoplasm. The protein resides in the nucleus. Involved in pre-mRNA splicing, specifically in spliceosome disassembly during late-stage splicing events. Intron turnover seems to proceed through reactions in two lariat-intron associated complexes termed Intron Large (IL) and Intron Small (IS). In cooperation with DHX15 seems to mediate the transition of the U2, U5 and U6 snRNP-containing IL complex to the snRNP-free IS complex leading to efficient debranching and turnover of excised introns. May play a role in the differentiation of ameloblasts and odontoblasts or in the forming of the enamel extracellular matrix. The chain is Tuftelin-interacting protein 11 (TFIP11) from Macaca fascicularis (Crab-eating macaque).